The chain runs to 130 residues: MSMQDPIADMLTRIRNGQAASKVAVSMPSSKLKVAIAKVLKEEGYITGYSVAGDVKPELEIELKYFQGKPVVELIQRVSRPGLRIYKRTTDLPKVMGGLGVAIVSTSKGVMTDRAARKASMGGEIICYVA.

The protein belongs to the universal ribosomal protein uS8 family. In terms of assembly, part of the 30S ribosomal subunit. Contacts proteins S5 and S12.

Functionally, one of the primary rRNA binding proteins, it binds directly to 16S rRNA central domain where it helps coordinate assembly of the platform of the 30S subunit. This Aeromonas hydrophila subsp. hydrophila (strain ATCC 7966 / DSM 30187 / BCRC 13018 / CCUG 14551 / JCM 1027 / KCTC 2358 / NCIMB 9240 / NCTC 8049) protein is Small ribosomal subunit protein uS8.